The primary structure comprises 195 residues: Imidazoleglycerol-phosphate dehydratase (195 aa).

It belongs to the imidazoleglycerol-phosphate dehydratase family.

Its subcellular location is the cytoplasm. The catalysed reaction is D-erythro-1-(imidazol-4-yl)glycerol 3-phosphate = 3-(imidazol-4-yl)-2-oxopropyl phosphate + H2O. It participates in amino-acid biosynthesis; L-histidine biosynthesis; L-histidine from 5-phospho-alpha-D-ribose 1-diphosphate: step 6/9. This is Imidazoleglycerol-phosphate dehydratase from Paracoccus denitrificans (strain Pd 1222).